The sequence spans 250 residues: 1-(5-phosphoribosyl)-5-[(5-phosphoribosylamino)methylideneamino] imidazole-4-carboxamide isomerase (250 aa).

Asp12 acts as the Proton acceptor in catalysis. Asp133 serves as the catalytic Proton donor.

This sequence belongs to the HisA/HisF family.

It is found in the cytoplasm. It carries out the reaction 1-(5-phospho-beta-D-ribosyl)-5-[(5-phospho-beta-D-ribosylamino)methylideneamino]imidazole-4-carboxamide = 5-[(5-phospho-1-deoxy-D-ribulos-1-ylimino)methylamino]-1-(5-phospho-beta-D-ribosyl)imidazole-4-carboxamide. It participates in amino-acid biosynthesis; L-histidine biosynthesis; L-histidine from 5-phospho-alpha-D-ribose 1-diphosphate: step 4/9. This is 1-(5-phosphoribosyl)-5-[(5-phosphoribosylamino)methylideneamino] imidazole-4-carboxamide isomerase from Zymomonas mobilis subsp. mobilis (strain ATCC 31821 / ZM4 / CP4).